Consider the following 307-residue polypeptide: Acetaldehyde dehydrogenase 1 (307 aa).

C132 acts as the Acyl-thioester intermediate in catalysis. NAD(+) is bound by residues 163–171 (SVGPGTRKN) and N274.

Belongs to the acetaldehyde dehydrogenase family.

The catalysed reaction is acetaldehyde + NAD(+) + CoA = acetyl-CoA + NADH + H(+). This is Acetaldehyde dehydrogenase 1 (tesF) from Comamonas testosteroni (Pseudomonas testosteroni).